Consider the following 1134-residue polypeptide: Tetrathionate reductase subunit A (1134 aa).

The segment at residues 1-31 (MQLSRRDFIKGLVAVGSASVFLAGYSETVDR) is a signal peptide (tat-type signal). In terms of domain architecture, 4Fe-4S Mo/W bis-MGD-type spans 46 to 133 (GRIVHSACLG…DGIHYLYDPY (88 aa)). Cys53, Cys56, Cys60, and Cys119 together coordinate [4Fe-4S] cluster.

This sequence belongs to the prokaryotic molybdopterin-containing oxidoreductase family. Probably composed of three subunits: TtrA, TtrB and TtrC. Precursor interacts with TtrD. It depends on [4Fe-4S] cluster as a cofactor. Mo-bis(molybdopterin guanine dinucleotide) serves as cofactor. In terms of processing, exported by the Tat system. The position of the signal peptide cleavage has not been experimentally proven.

The protein resides in the cell membrane. In terms of biological role, part of a membrane-bound tetrathionate reductase that catalyzes the reduction of tetrathionate to thiosulfate. TtrA is the catalytic subunit. In Archaeoglobus fulgidus (strain ATCC 49558 / DSM 4304 / JCM 9628 / NBRC 100126 / VC-16), this protein is Tetrathionate reductase subunit A (ttrA).